Reading from the N-terminus, the 341-residue chain is MLNERIQPGMIFLLTVSLCHFMEYRAVQAGNCWLQQSKNGRCQVLYRTELSKEECCKTGRLGTSWTEEDVPNSTLFKWMIFHGGAPHCIPCKETCENVDCGPGKKCKMNKKNKPRCVCAPDCSNITWKGSVCGIDGKTYKDECALLKAKCKGVPELDVQYQGKCKKTCRDVLCPGSSSCVVDQTNNAYCVTCNRICPEPTSPDQYLCGNDGITYGSACHLRKATCLLGRSIGLAYEGKCIKAKSCEDIQCSAGKKCLWDSRVGRGRCALCDDLCGESKSDDTVCASDNTTYPSECAMKQAACSTGILLEVKHSGSCNSIVEDTEEEEEEEEPDYSFVISSW.

The first 29 residues, 1-29 (MLNERIQPGMIFLLTVSLCHFMEYRAVQA), serve as a signal peptide directing secretion. The region spanning 30-103 (GNCWLQQSKN…TCENVDCGPG (74 aa)) is the TB domain. Intrachain disulfides connect C32-C55, C42-C88, C56-C91, C95-C106, C100-C116, C118-C150, C122-C143, and C132-C164. The N-linked (GlcNAc...) asparagine glycan is linked to N72. Residues 94–117 (TCENVDCGPGKKCKMNKKNKPRCV) form the Follistatin-like 1 domain. Kazal-like domains follow at residues 100-166 (CGPG…KCKK), 186-241 (NAYC…KCIK), and 264-318 (RGRC…SCNS). N124 carries an N-linked (GlcNAc...) asparagine glycan. The Follistatin-like 2 domain maps to 167–190 (TCRDVLCPGSSSCVVDQTNNAYCV). Cystine bridges form between C192/C225, C196/C218, and C207/C239. Positions 244–268 (SCEDIQCSAGKKCLWDSRVGRGRCA) constitute a Follistatin-like 3 domain. Cystine bridges form between C270-C302, C274-C295, and C284-C316. A glycan (N-linked (GlcNAc...) asparagine) is linked at N288. Acidic residues predominate over residues 321–333 (EDTEEEEEEEEPD). The disordered stretch occupies residues 321–341 (EDTEEEEEEEEPDYSFVISSW).

As to quaternary structure, monomer. In terms of tissue distribution, spemann organizer and notochord.

Its subcellular location is the secreted. Its function is as follows. Binds directly to activin and functions as an activin antagonist which plays a role in neural induction. The short isoform is a more potent inhibitor of activin than the long isoform. Specific inhibitor of the biosynthesis and secretion of pituitary follicle stimulating hormone (FSH). The chain is Follistatin (fst) from Xenopus laevis (African clawed frog).